The following is a 754-amino-acid chain: Elongation factor G-1, mitochondrial (754 aa).

The transit peptide at 1–17 (MARFPTSPAPNRLLRLF) directs the protein to the mitochondrion. The tr-type G domain occupies 63–340 (DKLRNIGISA…GVVSFLPSPN (278 aa)). GTP contacts are provided by residues 72-79 (AHIDSGKT), 139-143 (DTPGH), and 193-196 (NKLD).

It belongs to the TRAFAC class translation factor GTPase superfamily. Classic translation factor GTPase family. EF-G/EF-2 subfamily. Expressed in cotyledons and adult leaves at the same levels.

It is found in the mitochondrion. It participates in protein biosynthesis; polypeptide chain elongation. In terms of biological role, mitochondrial GTPase that catalyzes the GTP-dependent ribosomal translocation step during translation elongation. During this step, the ribosome changes from the pre-translocational (PRE) to the post-translocational (POST) state as the newly formed A-site-bound peptidyl-tRNA and P-site-bound deacylated tRNA move to the P and E sites, respectively. Catalyzes the coordinated movement of the two tRNA molecules, the mRNA and conformational changes in the ribosome. The chain is Elongation factor G-1, mitochondrial (MEFG1) from Arabidopsis thaliana (Mouse-ear cress).